The sequence spans 251 residues: Zinc import ATP-binding protein ZnuC (251 aa).

Positions 5 to 220 (VSLENVSVSF…PEFISMFGPR (216 aa)) constitute an ABC transporter domain. Residue 37–44 (GPNGAGKS) coordinates ATP.

The protein belongs to the ABC transporter superfamily. Zinc importer (TC 3.A.1.15.5) family. The complex is composed of two ATP-binding proteins (ZnuC), two transmembrane proteins (ZnuB) and a solute-binding protein (ZnuA).

Its subcellular location is the cell inner membrane. The enzyme catalyses Zn(2+)(out) + ATP(in) + H2O(in) = Zn(2+)(in) + ADP(in) + phosphate(in) + H(+)(in). Its function is as follows. Part of the ABC transporter complex ZnuABC involved in zinc import. Responsible for energy coupling to the transport system. Seems to be important for the virulence. This is Zinc import ATP-binding protein ZnuC from Salmonella typhimurium (strain LT2 / SGSC1412 / ATCC 700720).